A 96-amino-acid polypeptide reads, in one-letter code: ESAT-6-like protein SAG1039 (96 aa).

This sequence belongs to the WXG100 family. sagEsxA-like subfamily. In terms of assembly, homodimer.

In Streptococcus agalactiae serotype V (strain ATCC BAA-611 / 2603 V/R), this protein is ESAT-6-like protein SAG1039.